The primary structure comprises 751 residues: Phosphate transporter PHO1 homolog 8 (751 aa).

An SPX domain is found at 1-299 (MKFGKEYVAQ…LRNAAKLYME (299 aa)). Residues 1 to 351 (MKFGKEYVAQ…KVTKEKHRIT (351 aa)) are Cytoplasmic-facing. A helical transmembrane segment spans residues 352 to 372 (FSTGFFVGCTVSLVIALGLFI). Residues 373-392 (HARNIMGAVGHKLYMETMFP) are Extracellular-facing. The helical transmembrane segment at 393–413 (LYSLFAFVVLHMIMYASNIYF) threads the bilayer. Residues 414-434 (WKRYRVNYPFIFGFKEGTELG) lie on the Cytoplasmic side of the membrane. Residues 435–455 (YGHVLLLSFGLGTLALCAVLV) traverse the membrane as a helical segment. The Extracellular segment spans residues 456 to 473 (NMDMEMDPNTNDYKTITE). Residues 474-494 (LVPLFVVALVIAISVCPFNIF) form a helical membrane-spanning segment. Over 495-623 (YRSSRFFFLM…FSINRGNDWK (129 aa)) the chain is Cytoplasmic. One can recognise an EXS domain in the interval 558–751 (KSSDVYSTFY…NYDEEEDRDS (194 aa)). The chain crosses the membrane as a helical span at residues 624 to 644 (IAAWVFSGLATFYGTYWDIVY). The Extracellular portion of the chain corresponds to 645–667 (DWGLLHRPSKSWLREKLLVPHKS). A helical transmembrane segment spans residues 668-688 (VYYVAMVVNVVLRLAWLQTVL). Residues 689-751 (DFNISFLHRE…NYDEEEDRDS (63 aa)) lie on the Cytoplasmic side of the membrane.

Belongs to the SYG1 (TC 2.A.94) family. As to expression, expressed in root epidermis, leaf hydathodes, trichomes and petioles, stem vascular cylinder, receptacle, stigma apex and pollen grains.

Its subcellular location is the cell membrane. Functionally, may transport inorganic phosphate (Pi). The polypeptide is Phosphate transporter PHO1 homolog 8 (PHO1-H8) (Arabidopsis thaliana (Mouse-ear cress)).